We begin with the raw amino-acid sequence, 372 residues long: DNA replication and repair protein RecF (372 aa).

30–37 contacts ATP; it reads GENGQGKT.

It belongs to the RecF family.

The protein resides in the cytoplasm. In terms of biological role, the RecF protein is involved in DNA metabolism; it is required for DNA replication and normal SOS inducibility. RecF binds preferentially to single-stranded, linear DNA. It also seems to bind ATP. The polypeptide is DNA replication and repair protein RecF (Anaeromyxobacter dehalogenans (strain 2CP-C)).